We begin with the raw amino-acid sequence, 89 residues long: Bombyxin B-2 (89 aa).

Positions 1 to 19 (MKTSVMFMLVFVISLMCSS) are cleaved as a signal peptide. 3 disulfide bridges follow: C29–C75, C41–C88, and C74–C79. Positions 48-66 (SGAQYAPYFWTRQYLGSRG) are cleaved as a propeptide — c peptide like.

Belongs to the insulin family. In terms of assembly, heterodimer of a B chain and an A chain linked by two disulfide bonds.

It is found in the secreted. Functionally, brain peptide responsible for activation of prothoracic glands to produce ecdysone in insects. The polypeptide is Bombyxin B-2 (BBXB2) (Bombyx mori (Silk moth)).